A 219-amino-acid polypeptide reads, in one-letter code: Large ribosomal subunit protein uL3 (219 aa).

Disordered regions lie at residues 62 to 81 (DSRS…KKAG) and 136 to 156 (QARG…SVGM).

This sequence belongs to the universal ribosomal protein uL3 family. Part of the 50S ribosomal subunit. Forms a cluster with proteins L14 and L19.

One of the primary rRNA binding proteins, it binds directly near the 3'-end of the 23S rRNA, where it nucleates assembly of the 50S subunit. This is Large ribosomal subunit protein uL3 from Staphylococcus saprophyticus subsp. saprophyticus (strain ATCC 15305 / DSM 20229 / NCIMB 8711 / NCTC 7292 / S-41).